The chain runs to 358 residues: Ethanol acetyltransferase 1 (358 aa).

The 108-residue stretch at 59-166 folds into the AB hydrolase-1 domain; it reads PIVFIHGLFG…NAPINQPHIS (108 aa). Catalysis depends on charge relay system residues S132, D156, and H305.

It belongs to the AB hydrolase superfamily.

It is found in the mitochondrion. The catalysed reaction is ethanol + acetyl-CoA = ethyl acetate + CoA. The enzyme catalyses acetyl-CoA + H2O = acetate + CoA + H(+). It catalyses the reaction ethyl acetate + H2O = ethanol + acetate + H(+). In terms of biological role, alcohol acetyltransferase that catalyzes the synthesis of ethyl acetate from ethanol and acetyl-CoA. Can also function as a thioesterase by hydrolyzing acetyl-CoA in the absence of ethanol, as well as esterase hydrolyzing ethyl acetate. This Eremothecium cymbalariae (strain CBS 270.75 / DBVPG 7215 / KCTC 17166 / NRRL Y-17582) (Yeast) protein is Ethanol acetyltransferase 1 (EAT1).